Here is a 201-residue protein sequence, read N- to C-terminus: Recombination protein RecR (201 aa).

The segment at 57–72 (CQVCYSLSDNDICDIC) adopts a C4-type zinc-finger fold. Residues 80–177 (NKICIVESYP…RITRITYGIS (98 aa)) form the Toprim domain.

It belongs to the RecR family.

May play a role in DNA repair. It seems to be involved in an RecBC-independent recombinational process of DNA repair. It may act with RecF and RecO. The polypeptide is Recombination protein RecR (Brachyspira hyodysenteriae (strain ATCC 49526 / WA1)).